A 146-amino-acid polypeptide reads, in one-letter code: Phospholipase A2 OS2 (146 aa).

Residues 1 to 27 (MHPAHLLVLLAVCVSLLGASDIPPLPL) form the signal peptide. Intrachain disulfides connect C38–C99, C54–C145, C56–C72, C71–C126, C78–C119, C88–C112, and C106–C117. Residues Y55, G57, and G59 each coordinate Ca(2+). Residue H75 is part of the active site. Position 76 (D76) interacts with Ca(2+). D120 is an active-site residue.

Belongs to the phospholipase A2 family. Group I subfamily. D49 sub-subfamily. As to quaternary structure, monomer. Requires Ca(2+) as cofactor. In terms of tissue distribution, expressed by the venom gland.

The protein resides in the secreted. It catalyses the reaction a 1,2-diacyl-sn-glycero-3-phosphocholine + H2O = a 1-acyl-sn-glycero-3-phosphocholine + a fatty acid + H(+). Snake venom phospholipase A2 (PLA2) that shows high presynaptic neurotoxicity in vertebrata that is independent of catalytic activity, as well as local myotoxicity when intramuscularly injected into mice. Blocks acetylcholine release in Aplysia neurons, and potentiates pro-inflammatory cellular signaling. Potentiates glutamate excitoxicity when coinjected into brain of rats. May act by binding in a calcium-dependent fashion and with high affinity to a neuronal-type (N-type) PLA2 receptor, and with very high affinity to a muscle-type (M-type) PLA2 receptor. In vitro, shows a high-specific activity on E.coli membranes and is more efficient on the anionic phospholipid POPG than on the anionic phospholipid POPS or the zwitterionic phospholipid POPC. Exerts catalytically-independent anti-HIV (IC(50) is 35 nM) activity and catalytically-dependent antimalarial activity (IC(50) is 3.1 nM when tested on P.falciparum grown in serum that contains lipoproteins). PLA2 catalyzes the calcium-dependent hydrolysis of the 2-acyl groups in 3-sn-phosphoglycerides. This Oxyuranus scutellatus scutellatus (Australian taipan) protein is Phospholipase A2 OS2.